The sequence spans 62 residues: Photosystem II reaction center protein Z (62 aa).

2 helical membrane passes run 8–28 and 41–61; these read SVFALIILSFLLVIGVPVVLA and FSGASLWIGLVFLVGILNSFI.

It belongs to the PsbZ family. In terms of assembly, PSII is composed of 1 copy each of membrane proteins PsbA, PsbB, PsbC, PsbD, PsbE, PsbF, PsbH, PsbI, PsbJ, PsbK, PsbL, PsbM, PsbT, PsbY, PsbZ, Psb30/Ycf12, at least 3 peripheral proteins of the oxygen-evolving complex and a large number of cofactors. It forms dimeric complexes.

It localises to the plastid. Its subcellular location is the chloroplast thylakoid membrane. Functionally, may control the interaction of photosystem II (PSII) cores with the light-harvesting antenna, regulates electron flow through the 2 photosystem reaction centers. PSII is a light-driven water plastoquinone oxidoreductase, using light energy to abstract electrons from H(2)O, generating a proton gradient subsequently used for ATP formation. The chain is Photosystem II reaction center protein Z from Staurastrum punctulatum (Green alga).